The following is a 257-amino-acid chain: Dihydroorotate dehydrogenase B (NAD(+)), electron transfer subunit (257 aa).

The 101-residue stretch at 2–102 (IGRERMTVVS…LGPLGHGFPL (101 aa)) folds into the FAD-binding FR-type domain. FAD is bound by residues 53 to 56 (RPLS), 70 to 72 (IYR), and 77 to 78 (GT). The [2Fe-2S] cluster site is built by cysteine 221, cysteine 226, cysteine 229, and cysteine 244.

Belongs to the PyrK family. In terms of assembly, heterotetramer of 2 PyrK and 2 PyrD type B subunits. [2Fe-2S] cluster is required as a cofactor. It depends on FAD as a cofactor.

It functions in the pathway pyrimidine metabolism; UMP biosynthesis via de novo pathway; orotate from (S)-dihydroorotate (NAD(+) route): step 1/1. Its function is as follows. Responsible for channeling the electrons from the oxidation of dihydroorotate from the FMN redox center in the PyrD type B subunit to the ultimate electron acceptor NAD(+). This Geobacillus thermodenitrificans (strain NG80-2) protein is Dihydroorotate dehydrogenase B (NAD(+)), electron transfer subunit.